A 161-amino-acid polypeptide reads, in one-letter code: Allophycocyanin alpha-B chain (161 aa).

Asn71 bears the N4-methylasparagine mark. A (2R,3E)-phycocyanobilin-binding site is contributed by Cys81.

This sequence belongs to the phycobiliprotein family. Contains one covalently linked bilin chromophore.

It is found in the plastid. Its subcellular location is the chloroplast thylakoid membrane. Functionally, allophycocyanin is a photosynthetic bile pigment-protein complex with maximum absorption at approximately 650 nanometers. The sequence is that of Allophycocyanin alpha-B chain (apcD) from Pyropia yezoensis (Susabi-nori).